The chain runs to 265 residues: Tryptophan synthase alpha chain (265 aa).

Active-site proton acceptor residues include E49 and E60.

Belongs to the TrpA family. As to quaternary structure, tetramer of two alpha and two beta chains.

It carries out the reaction (1S,2R)-1-C-(indol-3-yl)glycerol 3-phosphate + L-serine = D-glyceraldehyde 3-phosphate + L-tryptophan + H2O. The protein operates within amino-acid biosynthesis; L-tryptophan biosynthesis; L-tryptophan from chorismate: step 5/5. The alpha subunit is responsible for the aldol cleavage of indoleglycerol phosphate to indole and glyceraldehyde 3-phosphate. In Herminiimonas arsenicoxydans, this protein is Tryptophan synthase alpha chain.